The primary structure comprises 295 residues: Tissue factor (295 aa).

The first 28 residues, 1–28 (MAIPMRPRLLAALAPTFLGFLLLQVAVG), serve as a signal peptide directing secretion. The Extracellular segment spans residues 29–252 (AGTPPGKAFN…TEQWKSVLGE (224 aa)). N-linked (GlcNAc...) asparagine glycans are attached at residues asparagine 38 and asparagine 58. Cysteine 76 and cysteine 84 are oxidised to a cystine. N-linked (GlcNAc...) asparagine glycans are attached at residues asparagine 95, asparagine 109, asparagine 170, and asparagine 201. Cysteines 219 and 242 form a disulfide. The WKS motif signature appears at 246–248 (WKS). A helical transmembrane segment spans residues 253-275 (TLIIVGAVVFLVTVFIILLTISL). The S-palmitoyl cysteine moiety is linked to residue cysteine 276. The Cytoplasmic segment spans residues 276–295 (CKRRKNRAGQKRKNTPSRLA).

It belongs to the tissue factor family. Interacts with HSPE; the interaction, inhibited by heparin, promotes the generation of activated factor X and activates coagulation in the presence of activated factor VII.

The protein resides in the membrane. In terms of biological role, initiates blood coagulation by forming a complex with circulating factor VII or VIIa. The [TF:VIIa] complex activates factors IX or X by specific limited proteolysis. TF plays a role in normal hemostasis by initiating the cell-surface assembly and propagation of the coagulation protease cascade. In Rattus norvegicus (Rat), this protein is Tissue factor (F3).